We begin with the raw amino-acid sequence, 124 residues long: Putative melanoma-associated antigen 5P (124 aa).

The segment covering 1–14 (MSLEQKSQHCKPEE) has biased composition (basic and acidic residues). Disordered stretches follow at residues 1–69 (MSLE…QGAS) and 82–103 (QSIK…DPES). The region spanning 3-124 (LEQKSQHCKP…DLIHFLLLKY (122 aa)) is the MAGE domain. Polar residues-rich tracts occupy residues 30-44 (AATT…SSSP) and 82-100 (QSIK…TSPD).

As to expression, expressed in many tumors of several types, such as melanoma, head and neck squamous cell carcinoma, lung carcinoma and breast carcinoma, but not in normal tissues except for testes.

May negatively regulates apoptosis. The polypeptide is Putative melanoma-associated antigen 5P (Homo sapiens (Human)).